We begin with the raw amino-acid sequence, 31 residues long: Cytochrome b6-f complex subunit 6 (31 aa).

Residues 5-25 (ISYLGILVGALLFVTITFLTL) form a helical membrane-spanning segment.

The protein belongs to the PetL family. In terms of assembly, the 4 large subunits of the cytochrome b6-f complex are cytochrome b6, subunit IV (17 kDa polypeptide, PetD), cytochrome f and the Rieske protein, while the 4 small subunits are PetG, PetL, PetM and PetN. The complex functions as a dimer.

Its subcellular location is the plastid. The protein resides in the chloroplast thylakoid membrane. Component of the cytochrome b6-f complex, which mediates electron transfer between photosystem II (PSII) and photosystem I (PSI), cyclic electron flow around PSI, and state transitions. PetL is important for photoautotrophic growth as well as for electron transfer efficiency and stability of the cytochrome b6-f complex. In Chlorokybus atmophyticus (Soil alga), this protein is Cytochrome b6-f complex subunit 6.